We begin with the raw amino-acid sequence, 400 residues long: Formate-dependent phosphoribosylglycinamide formyltransferase (400 aa).

N(1)-(5-phospho-beta-D-ribosyl)glycinamide is bound by residues 22–23 (EL) and E82. Residues R115, K156, 161–166 (SSGKGQ), 196–199 (EGFI), and E204 each bind ATP. Residues 120 to 309 (RLAAETLGLP…EFALHARAIL (190 aa)) form the ATP-grasp domain. The Mg(2+) site is built by E268 and E280. N(1)-(5-phospho-beta-D-ribosyl)glycinamide-binding positions include D287, K361, and 368 to 369 (RR).

It belongs to the PurK/PurT family. As to quaternary structure, homodimer.

The catalysed reaction is N(1)-(5-phospho-beta-D-ribosyl)glycinamide + formate + ATP = N(2)-formyl-N(1)-(5-phospho-beta-D-ribosyl)glycinamide + ADP + phosphate + H(+). It functions in the pathway purine metabolism; IMP biosynthesis via de novo pathway; N(2)-formyl-N(1)-(5-phospho-D-ribosyl)glycinamide from N(1)-(5-phospho-D-ribosyl)glycinamide (formate route): step 1/1. Its function is as follows. Involved in the de novo purine biosynthesis. Catalyzes the transfer of formate to 5-phospho-ribosyl-glycinamide (GAR), producing 5-phospho-ribosyl-N-formylglycinamide (FGAR). Formate is provided by PurU via hydrolysis of 10-formyl-tetrahydrofolate. The chain is Formate-dependent phosphoribosylglycinamide formyltransferase from Xanthomonas oryzae pv. oryzae (strain PXO99A).